The primary structure comprises 188 residues: Elongation factor P (188 aa).

The protein belongs to the elongation factor P family.

Its subcellular location is the cytoplasm. The protein operates within protein biosynthesis; polypeptide chain elongation. Its function is as follows. Involved in peptide bond synthesis. Stimulates efficient translation and peptide-bond synthesis on native or reconstituted 70S ribosomes in vitro. Probably functions indirectly by altering the affinity of the ribosome for aminoacyl-tRNA, thus increasing their reactivity as acceptors for peptidyl transferase. In Paramagnetospirillum magneticum (strain ATCC 700264 / AMB-1) (Magnetospirillum magneticum), this protein is Elongation factor P.